A 317-amino-acid chain; its full sequence is Ribosomal RNA small subunit methyltransferase H (317 aa).

S-adenosyl-L-methionine is bound by residues 37–39 (AGH), aspartate 56, phenylalanine 85, aspartate 106, and glutamine 113.

Belongs to the methyltransferase superfamily. RsmH family.

Its subcellular location is the cytoplasm. It catalyses the reaction cytidine(1402) in 16S rRNA + S-adenosyl-L-methionine = N(4)-methylcytidine(1402) in 16S rRNA + S-adenosyl-L-homocysteine + H(+). Specifically methylates the N4 position of cytidine in position 1402 (C1402) of 16S rRNA. The sequence is that of Ribosomal RNA small subunit methyltransferase H from Lactococcus lactis subsp. cremoris (strain SK11).